The following is a 112-amino-acid chain: UPF0102 protein TTHA0372 (112 aa).

Belongs to the UPF0102 family.

The chain is UPF0102 protein TTHA0372 from Thermus thermophilus (strain ATCC 27634 / DSM 579 / HB8).